We begin with the raw amino-acid sequence, 367 residues long: Di-N-acetylchitobiase (367 aa).

Residues 1-23 (MALSDLLELTLLLLLPLLERLSA) form the signal peptide. The region spanning 24–367 (EDCPCSEASL…EMWGALRPRL (344 aa)) is the GH18 domain. E128 (proton donor) is an active-site residue. N-linked (GlcNAc...) asparagine glycans are attached at residues N178, N213, N247, and N284.

The protein belongs to the glycosyl hydrolase 18 family.

The protein localises to the lysosome. In terms of biological role, involved in the degradation of asparagine-linked glycoproteins. Hydrolyze of N-acetyl-beta-D-glucosamine (1-4)N-acetylglucosamine chitobiose core from the reducing end of the bond, it requires prior cleavage by glycosylasparaginase. This is Di-N-acetylchitobiase (Ctbs) from Rattus norvegicus (Rat).